A 143-amino-acid chain; its full sequence is Endoribonuclease YbeY (143 aa).

Residues His109, His113, and His119 each contribute to the Zn(2+) site.

It belongs to the endoribonuclease YbeY family. The cofactor is Zn(2+).

The protein resides in the cytoplasm. In terms of biological role, single strand-specific metallo-endoribonuclease involved in late-stage 70S ribosome quality control and in maturation of the 3' terminus of the 16S rRNA. The polypeptide is Endoribonuclease YbeY (Leptospira borgpetersenii serovar Hardjo-bovis (strain JB197)).